The following is a 251-amino-acid chain: Chorismate mutase (251 aa).

In terms of domain architecture, Chorismate mutase spans 1–251 (MSLVNEKLKL…EVDYLLARLL (251 aa)). The L-tyrosine site is built by Arg-74, Arg-75, Asn-134, Gly-136, and Ser-137. L-tryptophan-binding residues include Asn-134, Gly-136, and Ser-137.

Homodimer.

It is found in the cytoplasm. It catalyses the reaction chorismate = prephenate. Its pathway is metabolic intermediate biosynthesis; prephenate biosynthesis; prephenate from chorismate: step 1/1. Its activity is regulated as follows. Each dimer has two allosteric binding sites that can bind the regulatory effectors tryptophan or tyrosine. Can bind either one tryptophan or one tyrosine, two tryptophan or two tyrosine or one tryptophan and one tyrosine, which differentially affect the catalytic activity. Activated by tryptophan and subject to feedback inhibition by tyrosine. In the presence of both tryptophan and tyrosine, the enzyme is in the activated state. Catalyzes the Claisen rearrangement of chorismate to prephenate. Acts at the first branch point in the aromatic amino acid pathway where it steers biosynthesis towards phenylalanine and tyrosine, and away from tryptophan. The chain is Chorismate mutase from Schizosaccharomyces pombe (strain 972 / ATCC 24843) (Fission yeast).